The primary structure comprises 242 residues: Carbendazim hydrolyzing esterase (242 aa).

Ser-77 acts as the Acyl-ester intermediate in catalysis.

Belongs to the AB hydrolase superfamily.

It localises to the secreted. It carries out the reaction carbendazim + H2O = 2-aminobenzimidazole + methanol + CO2. The enzyme catalyses carbendazim + H2O = N-(1H-1,3-benzodiazol-2-yl)carbamate + methanol + H(+). It catalyses the reaction N-(1H-1,3-benzodiazol-2-yl)carbamate + H(+) = 2-aminobenzimidazole + CO2. In terms of biological role, catalyzes the hydrolysis of the fungicide carbendazim (methyl-1H-benzimidazol-2-ylcarbamate or MBC) to 2-aminobenzimidazole (2-AB). Following hydrolysis of the carbamate ester, the carbamate decarboxylates spontaneously. Can hydrolyze model carboxylesters such as methyl salicylate, alpha-naphthyl acetate and p-nitrophenyl acetate. In addition, shows substantial hydrolytic activity in vitro against widespread pollutants with carboxylester, carbamate and amide linkages, such as dimethyl phthalate, propanil and chlorpropham. This chain is Carbendazim hydrolyzing esterase, found in Nocardioides sp. (strain SG-4G).